The following is a 194-amino-acid chain: Molybdenum cofactor guanylyltransferase (194 aa).

Residues 12–14 (LAG), Lys25, Asn53, Asp70, and Asp100 each bind GTP. Asp100 serves as a coordination point for Mg(2+).

It belongs to the MobA family. In terms of assembly, monomer. The cofactor is Mg(2+).

The protein resides in the cytoplasm. It catalyses the reaction Mo-molybdopterin + GTP + H(+) = Mo-molybdopterin guanine dinucleotide + diphosphate. Transfers a GMP moiety from GTP to Mo-molybdopterin (Mo-MPT) cofactor (Moco or molybdenum cofactor) to form Mo-molybdopterin guanine dinucleotide (Mo-MGD) cofactor. This Aliivibrio fischeri (strain ATCC 700601 / ES114) (Vibrio fischeri) protein is Molybdenum cofactor guanylyltransferase.